Consider the following 433-residue polypeptide: Trigger factor (433 aa).

The PPIase FKBP-type domain maps to 166–251 (GDFAVIDFEG…LHEIQERAKP (86 aa)).

It belongs to the FKBP-type PPIase family. Tig subfamily.

It localises to the cytoplasm. It carries out the reaction [protein]-peptidylproline (omega=180) = [protein]-peptidylproline (omega=0). Involved in protein export. Acts as a chaperone by maintaining the newly synthesized protein in an open conformation. Functions as a peptidyl-prolyl cis-trans isomerase. This Aliarcobacter butzleri (strain RM4018) (Arcobacter butzleri) protein is Trigger factor.